Here is a 366-residue protein sequence, read N- to C-terminus: 3-dehydroquinate synthase (366 aa).

NAD(+)-binding positions include 75–80 (DGEEYK), 109–113 (GVVGD), 133–134 (TT), K146, K155, and 173–176 (TLDT). Residues E188, H251, and H268 each coordinate Zn(2+).

The protein belongs to the sugar phosphate cyclases superfamily. Dehydroquinate synthase family. Co(2+) serves as cofactor. The cofactor is Zn(2+). It depends on NAD(+) as a cofactor.

The protein resides in the cytoplasm. The catalysed reaction is 7-phospho-2-dehydro-3-deoxy-D-arabino-heptonate = 3-dehydroquinate + phosphate. It functions in the pathway metabolic intermediate biosynthesis; chorismate biosynthesis; chorismate from D-erythrose 4-phosphate and phosphoenolpyruvate: step 2/7. Functionally, catalyzes the conversion of 3-deoxy-D-arabino-heptulosonate 7-phosphate (DAHP) to dehydroquinate (DHQ). The polypeptide is 3-dehydroquinate synthase (Nitrosospira multiformis (strain ATCC 25196 / NCIMB 11849 / C 71)).